Here is a 591-residue protein sequence, read N- to C-terminus: Probable lysosomal cobalamin transporter (591 aa).

5 helical membrane-spanning segments follow: residues 8–28 (LIWVAYAVAVAILFLIASTFV), 39–59 (AAVTIVCIFTTLALLATVLLI), 95–115 (IVYYTLYSLDAVLCLLVIPFT), 144–164 (WTLGFLIFVVAIFLVGFFVPF), and 198–218 (FLITVGTVLFVLYTGAGMALL). Positions 238–266 (TASQLETNRERQRQLEGRNEGREGGLDSR) are disordered. A compositionally biased stretch (basic and acidic residues) spans 244-266 (TNRERQRQLEGRNEGREGGLDSR). 4 helical membrane-spanning segments follow: residues 315 to 335 (LIGGLILLVFALVIFASMLIT), 378 to 398 (VLFLLLVLFLFSASVVGIATA), 422 to 442 (MATVLLTLITLAINYSVAMVV), and 509 to 529 (FFGIVLFWAQFAFLGVYLIVF).

This sequence belongs to the LIMR family. LMBRD1 subfamily.

It is found in the lysosome membrane. Its function is as follows. Probable lysosomal cobalamin transporter. Required to export cobalamin from lysosomes allowing its conversion to cofactors. This chain is Probable lysosomal cobalamin transporter, found in Pyrenophora tritici-repentis (strain Pt-1C-BFP) (Wheat tan spot fungus).